The chain runs to 248 residues: 1-(5-phosphoribosyl)-5-[(5-phosphoribosylamino)methylideneamino] imidazole-4-carboxamide isomerase (248 aa).

Asp8 acts as the Proton acceptor in catalysis. Residue Asp131 is the Proton donor of the active site.

Belongs to the HisA/HisF family.

The protein resides in the cytoplasm. It carries out the reaction 1-(5-phospho-beta-D-ribosyl)-5-[(5-phospho-beta-D-ribosylamino)methylideneamino]imidazole-4-carboxamide = 5-[(5-phospho-1-deoxy-D-ribulos-1-ylimino)methylamino]-1-(5-phospho-beta-D-ribosyl)imidazole-4-carboxamide. It participates in amino-acid biosynthesis; L-histidine biosynthesis; L-histidine from 5-phospho-alpha-D-ribose 1-diphosphate: step 4/9. This is 1-(5-phosphoribosyl)-5-[(5-phosphoribosylamino)methylideneamino] imidazole-4-carboxamide isomerase from Cupriavidus taiwanensis (strain DSM 17343 / BCRC 17206 / CCUG 44338 / CIP 107171 / LMG 19424 / R1) (Ralstonia taiwanensis (strain LMG 19424)).